We begin with the raw amino-acid sequence, 108 residues long: Phosphoribosyl-ATP pyrophosphatase (108 aa).

This sequence belongs to the PRA-PH family.

The protein localises to the cytoplasm. It carries out the reaction 1-(5-phospho-beta-D-ribosyl)-ATP + H2O = 1-(5-phospho-beta-D-ribosyl)-5'-AMP + diphosphate + H(+). It functions in the pathway amino-acid biosynthesis; L-histidine biosynthesis; L-histidine from 5-phospho-alpha-D-ribose 1-diphosphate: step 2/9. The chain is Phosphoribosyl-ATP pyrophosphatase from Trichlorobacter lovleyi (strain ATCC BAA-1151 / DSM 17278 / SZ) (Geobacter lovleyi).